The chain runs to 277 residues: 3-methyl-2-oxobutanoate hydroxymethyltransferase (277 aa).

Mg(2+)-binding residues include Asp-53 and Asp-96. 3-methyl-2-oxobutanoate is bound by residues 53–54 (DS), Asp-96, and Lys-126. A Mg(2+)-binding site is contributed by Glu-128. The active-site Proton acceptor is Glu-195.

This sequence belongs to the PanB family. Homodecamer; pentamer of dimers. It depends on Mg(2+) as a cofactor.

The protein localises to the cytoplasm. It carries out the reaction 3-methyl-2-oxobutanoate + (6R)-5,10-methylene-5,6,7,8-tetrahydrofolate + H2O = 2-dehydropantoate + (6S)-5,6,7,8-tetrahydrofolate. It participates in cofactor biosynthesis; (R)-pantothenate biosynthesis; (R)-pantoate from 3-methyl-2-oxobutanoate: step 1/2. Catalyzes the reversible reaction in which hydroxymethyl group from 5,10-methylenetetrahydrofolate is transferred onto alpha-ketoisovalerate to form ketopantoate. The sequence is that of 3-methyl-2-oxobutanoate hydroxymethyltransferase from Chlorobium phaeobacteroides (strain BS1).